The chain runs to 276 residues: CTD small phosphatase-like protein (276 aa).

The disordered stretch occupies residues 1–31 (MDGPAIITQVTNPKEDEARSPVAGEKASQRN). The 159-residue stretch at 102-260 (LDYGKKCVVI…LDLIPFFEGL (159 aa)) folds into the FCP1 homology domain. The 4-aspartylphosphate intermediate role is filled by Asp112. Positions 112, 114, and 223 each coordinate Mg(2+). The Proton donor role is filled by Asp114.

Monomer. Interacts with REST. It depends on Mg(2+) as a cofactor.

Its subcellular location is the nucleus. The enzyme catalyses O-phospho-L-seryl-[protein] + H2O = L-seryl-[protein] + phosphate. It carries out the reaction O-phospho-L-threonyl-[protein] + H2O = L-threonyl-[protein] + phosphate. Its function is as follows. Preferentially catalyzes the dephosphorylation of 'Ser-5' within the tandem 7 residue repeats in the C-terminal domain (CTD) of the largest RNA polymerase II subunit POLR2A. Negatively regulates RNA polymerase II transcription, possibly by controlling the transition from initiation/capping to processive transcript elongation. Recruited by REST to neuronal genes that contain RE-1 elements, leading to neuronal gene silencing in non-neuronal cells. The chain is CTD small phosphatase-like protein (Ctdspl) from Mus musculus (Mouse).